We begin with the raw amino-acid sequence, 1363 residues long: ABC multidrug transporter MDR2 (1363 aa).

The chain crosses the membrane as a helical span at residues 65–85 (IALIVIGTIAGIGAGIPFPLL). Residues 69–367 (VIGTIAGIGA…MAPFMHIFAS (299 aa)) enclose the ABC transmembrane type-1 1 domain. An N-linked (GlcNAc...) asparagine glycan is attached at N97. 5 helical membrane passes run 119–139 (VLQV…HTGC), 193–213 (KVGL…VAFL), 215–235 (VATI…MAFG), 301–321 (IQFG…FWQG), and 336–356 (VSVG…FVLS). The 280-residue stretch at 403 to 682 (IELQDVTFNY…DGVYAGMVRL (280 aa)) folds into the ABC transporter 1 domain. 438–445 (GTSGSGKS) is a binding site for ATP. N-linked (GlcNAc...) asparagine glycans are attached at residues N552 and N633. The disordered stretch occupies residues 738-758 (YMPEEADSLPTEPENEKEKPK). The next 3 helical transmembrane spans lie at 781–801 (LGLI…VIFG), 820–840 (GMLF…AVIV), and 896–916 (LTGT…AGVI). Residues 781–1052 (LGLITSIMIG…MFALVPDISK (272 aa)) form the ABC transmembrane type-1 2 domain. A glycan (N-linked (GlcNAc...) asparagine) is linked at N973. 2 helical membrane passes run 992 to 1012 (FWLS…YWWG) and 1016 to 1036 (ILAG…LLFS). An ABC transporter 2 domain is found at 1119-1358 (VQFRNVHFRY…CESYRANVIH (240 aa)). An ATP-binding site is contributed by 1154 to 1161 (GPSGSGKS).

The protein belongs to the ABC transporter superfamily. ABCB family. Multidrug resistance exporter (TC 3.A.1.201) subfamily.

Its subcellular location is the cell membrane. Its function is as follows. Pleiotropic ABC efflux transporter that may be involved in the modulation susceptibility to a wide range of unrelated cytotoxic compounds. This Trichophyton tonsurans (strain CBS 112818) (Scalp ringworm fungus) protein is ABC multidrug transporter MDR2.